The chain runs to 195 residues: MTSATAGLNLSDSVYERLLRERIIFLGTQVDDDIANKLCAQILLLSAEDPSRDISLYINSPGGSVSAGMAIFDTMQFAECDVATFGMGLAASMGQFLLSAGAKGKRYALPHARIMMHQPSAGIGGTASDIAIMAEQFAHTKREMAELIAEHTGQTVEQITADSDRDRWFTAQQALEYGFVDHVVSRAAQAGGTGQ.

Ser-92 (nucleophile) is an active-site residue. His-117 is a catalytic residue.

Belongs to the peptidase S14 family. In terms of assembly, fourteen ClpP subunits assemble into 2 heptameric rings which stack back to back to give a disk-like structure with a central cavity, resembling the structure of eukaryotic proteasomes.

Its subcellular location is the cytoplasm. The enzyme catalyses Hydrolysis of proteins to small peptides in the presence of ATP and magnesium. alpha-casein is the usual test substrate. In the absence of ATP, only oligopeptides shorter than five residues are hydrolyzed (such as succinyl-Leu-Tyr-|-NHMec, and Leu-Tyr-Leu-|-Tyr-Trp, in which cleavage of the -Tyr-|-Leu- and -Tyr-|-Trp bonds also occurs).. In terms of biological role, cleaves peptides in various proteins in a process that requires ATP hydrolysis. Has a chymotrypsin-like activity. Plays a major role in the degradation of misfolded proteins. This Rhodococcus jostii (strain RHA1) protein is ATP-dependent Clp protease proteolytic subunit 2.